A 1488-amino-acid polypeptide reads, in one-letter code: Chromosome partition protein MukB (1488 aa).

An ATP-binding site is contributed by 34–41; sequence GGNGAGKS. Coiled-coil stretches lie at residues 326 to 418, 444 to 472, and 509 to 602; these read LEAD…QYNQ, LDTF…QTAH, and RHLA…QRAP. The interval 666–783 is flexible hinge; that stretch reads PGGAEDQRLN…SLPIFGRAAR (118 aa). Coiled coils occupy residues 835 to 923, 977 to 1116, and 1209 to 1265; these read EAEI…AKLE, EMLS…AKAG, and VEAI…LQSV.

It belongs to the SMC family. MukB subfamily. As to quaternary structure, homodimerization via its hinge domain. Binds to DNA via its C-terminal region. Interacts, and probably forms a ternary complex, with MukE and MukF via its C-terminal region. The complex formation is stimulated by calcium or magnesium. Interacts with tubulin-related protein FtsZ.

The protein resides in the cytoplasm. The protein localises to the nucleoid. Plays a central role in chromosome condensation, segregation and cell cycle progression. Functions as a homodimer, which is essential for chromosome partition. Involved in negative DNA supercoiling in vivo, and by this means organize and compact chromosomes. May achieve or facilitate chromosome segregation by condensation DNA from both sides of a centrally located replisome during cell division. This chain is Chromosome partition protein MukB, found in Salmonella paratyphi B (strain ATCC BAA-1250 / SPB7).